Consider the following 152-residue polypeptide: Leptin (152 aa).

The N-terminal stretch at 1–26 (MDHILALVLALLPLSLCVALPGALDA) is a signal peptide. A disulfide bridge links Cys109 with Cys152.

The protein belongs to the leptin family. In terms of tissue distribution, expressed mostly in the liver.

It localises to the secreted. May function as part of a signaling pathway that acts to regulate the size of the body fat depot. The protein is Leptin (lep) of Takifugu rubripes (Japanese pufferfish).